We begin with the raw amino-acid sequence, 1405 residues long: Rho guanine nucleotide exchange factor 18 (1405 aa).

3 disordered regions span residues 1 to 47, 92 to 115, and 289 to 330; these read MGSE…EDGF, ETHR…ALPQ, and PGKS…PGKR. Basic and acidic residues-rich tracts occupy residues 92-103 and 308-330; these read ETHRQEARRESS and RQKE…PGKR. Residues 347–372 form a C2H2-type; degenerate zinc finger; the sequence is SSCPLCGEPLLNSASLKEHPRTTLLS. The DH domain maps to 485–682; that stretch reads KRQDVLYELM…KDIISQVDAK (198 aa). In terms of domain architecture, PH spans 723-825; the sequence is QLHLEGALCW…WMAHIRRAVE (103 aa). The tract at residues 936 to 1016 is disordered; it reads QVEEGSVSAG…PQAVEMPSTE (81 aa). Phosphothreonine is present on threonine 952. Serine 961 bears the Phosphoserine mark. The stretch at 1084–1181 forms a coiled coil; that stretch reads FEKQREERAG…RERLELLRRF (98 aa). Disordered regions lie at residues 1198-1242, 1274-1309, and 1328-1405; these read EAQP…VERP, RQTA…WESS, and ESAS…VIFF. A phosphoserine mark is found at serine 1336 and serine 1338. The segment covering 1355 to 1365 has biased composition (pro residues); it reads FPAPSPAPAAT. The segment covering 1375-1394 has biased composition (low complexity); sequence TSLPPVSPASSLPTTPLATT. The span at 1396–1405 shows a compositional bias: basic and acidic residues; the sequence is EVSKEDVIFF.

Interacts with SEPT9; interaction may inhibit GEF activity. Interacts with Gbetagamma subunits GNB1 and GNG2. Interacts with EPB41L4B. Interacts with PATJ (via C-terminus).

It localises to the cytoplasm. The protein localises to the cytoskeleton. It is found in the cell membrane. Its subcellular location is the apical cell membrane. Functionally, acts as a guanine nucleotide exchange factor (GEF) for RhoA GTPases. May play a role in actin cytoskeleton reorganization in different tissues since its activation induces formation of actin stress fibers. Also acts as a GEF for RAC1, inducing production of reactive oxygen species (ROS). Does not act as a GEF for CDC42. The G protein beta-gamma (Gbetagamma) subunits of heterotrimeric G proteins act as activators, explaining the integrated effects of LPA and other G-protein coupled receptor agonists on actin stress fiber formation, cell shape change and ROS production. Required for EPB41L4B-mediated regulation of the circumferential actomyosin belt in epithelial cells. The sequence is that of Rho guanine nucleotide exchange factor 18 (Arhgef18) from Mus musculus (Mouse).